Reading from the N-terminus, the 699-residue chain is Elongation factor G 2 (699 aa).

The region spanning 8 to 290 (ERYRNIGICA…AVIEYLPSPT (283 aa)) is the tr-type G domain. GTP-binding positions include 17-24 (AHVDAGKT), 88-92 (DTPGH), and 142-145 (NKMD).

This sequence belongs to the TRAFAC class translation factor GTPase superfamily. Classic translation factor GTPase family. EF-G/EF-2 subfamily.

Its subcellular location is the cytoplasm. Functionally, catalyzes the GTP-dependent ribosomal translocation step during translation elongation. During this step, the ribosome changes from the pre-translocational (PRE) to the post-translocational (POST) state as the newly formed A-site-bound peptidyl-tRNA and P-site-bound deacylated tRNA move to the P and E sites, respectively. Catalyzes the coordinated movement of the two tRNA molecules, the mRNA and conformational changes in the ribosome. The sequence is that of Elongation factor G 2 from Colwellia psychrerythraea (strain 34H / ATCC BAA-681) (Vibrio psychroerythus).